The chain runs to 562 residues: Dihydroxy-acid dehydratase 1 (562 aa).

Aspartate 80 provides a ligand contact to Mg(2+). Cysteine 121 lines the [2Fe-2S] cluster pocket. Residues aspartate 122 and lysine 123 each coordinate Mg(2+). Lysine 123 carries the post-translational modification N6-carboxylysine. Cysteine 194 is a [2Fe-2S] cluster binding site. Position 446 (glutamate 446) interacts with Mg(2+). The Proton acceptor role is filled by serine 472.

The protein belongs to the IlvD/Edd family. In terms of assembly, homodimer. Requires [2Fe-2S] cluster as cofactor. The cofactor is Mg(2+).

It catalyses the reaction (2R)-2,3-dihydroxy-3-methylbutanoate = 3-methyl-2-oxobutanoate + H2O. The catalysed reaction is (2R,3R)-2,3-dihydroxy-3-methylpentanoate = (S)-3-methyl-2-oxopentanoate + H2O. It participates in amino-acid biosynthesis; L-isoleucine biosynthesis; L-isoleucine from 2-oxobutanoate: step 3/4. It functions in the pathway amino-acid biosynthesis; L-valine biosynthesis; L-valine from pyruvate: step 3/4. Its function is as follows. Functions in the biosynthesis of branched-chain amino acids. Catalyzes the dehydration of (2R,3R)-2,3-dihydroxy-3-methylpentanoate (2,3-dihydroxy-3-methylvalerate) into 2-oxo-3-methylpentanoate (2-oxo-3-methylvalerate) and of (2R)-2,3-dihydroxy-3-methylbutanoate (2,3-dihydroxyisovalerate) into 2-oxo-3-methylbutanoate (2-oxoisovalerate), the penultimate precursor to L-isoleucine and L-valine, respectively. The protein is Dihydroxy-acid dehydratase 1 of Staphylococcus saprophyticus subsp. saprophyticus (strain ATCC 15305 / DSM 20229 / NCIMB 8711 / NCTC 7292 / S-41).